The chain runs to 65 residues: Large ribosomal subunit protein bL33m (65 aa).

A mitochondrion-targeting transit peptide spans 1 to 8 (MFLTTANL).

This sequence belongs to the bacterial ribosomal protein bL33 family. As to quaternary structure, component of the mitochondrial ribosome large subunit (39S) which comprises a 16S rRNA and about 50 distinct proteins.

It localises to the mitochondrion. This is Large ribosomal subunit protein bL33m (mrpl33) from Tetraodon nigroviridis (Spotted green pufferfish).